The sequence spans 159 residues: Ankyrin repeat domain-containing protein 37 (159 aa).

3 ANK repeats span residues 1–25 (MLLL…SVNA), 30–59 (QEQS…DLNQ), and 63–92 (LGET…QIGV). A Nuclear localization signal motif is present at residues 130–150 (EQQERDPRAPVLRQKRSFRTV).

Ubiquitinated by the CRL2(FEM1B) complex, leading to its degradation. Expressed testis, ovary, uterus, kidney, liver, but not in other tissues.

The protein localises to the nucleus. The protein resides in the cytoplasm. The chain is Ankyrin repeat domain-containing protein 37 from Mus musculus (Mouse).